Here is a 363-residue protein sequence, read N- to C-terminus: Type-2 angiotensin II receptor (363 aa).

The Extracellular segment spans residues 1 to 45; sequence MKDNFSFAATSRNITSSRPFDNLNATGTNESAFNCSHKPSDKHLE. N-linked (GlcNAc...) asparagine glycans are attached at residues Asn4, Asn13, Asn24, Asn29, and Asn34. 2 disulfides stabilise this stretch: Cys35–Cys290 and Cys117–Cys195. Residues 46-70 form a helical membrane-spanning segment; it reads AIPVLYYMIFVIGFAVNIVVVSLFC. Over 71 to 80 the chain is Cytoplasmic; the sequence is CQKGPKKVSS. Residues 81-104 form a helical membrane-spanning segment; that stretch reads IYIFNLALADLLLLATLPLWATYY. The angiotensin II site is built by Tyr103 and Tyr104. The Extracellular portion of the chain corresponds to 105–114; that stretch reads SYRYDWLFGP. The helical transmembrane segment at 115-140 threads the bilayer; that stretch reads VMCKVFGSFLTLNMFASIFFITCMSV. The Cytoplasmic segment spans residues 141–159; that stretch reads DRYQSVIYPFLSQRRNPWQ. A helical transmembrane segment spans residues 160–181; that stretch reads ASYVVPLVWCMACLSSLPTFYF. Positions 182, 204, and 215 each coordinate angiotensin II. The Extracellular portion of the chain corresponds to 182-206; that stretch reads RDVRTIEYLGVNACIMAFPPEKYAQ. Residues 207-232 traverse the membrane as a helical segment; that stretch reads WSAGIALMKNILGFIIPLIFIATCYF. The Cytoplasmic segment spans residues 233 to 257; the sequence is GIRKHLLKTNSYGKNRITRDQVLKM. The helical transmembrane segment at 258–281 threads the bilayer; the sequence is AAAVVLAFIICWLPFHVLTFLDAL. Asp279 lines the angiotensin II pocket. The Extracellular segment spans residues 282–294; sequence TWMGIINSCEVIA. The chain crosses the membrane as a helical span at residues 295–320; that stretch reads VIDLALPFAILLGFTNSCVNPFLYCF. Position 297 (Asp297) interacts with angiotensin II. Residues 321–363 lie on the Cytoplasmic side of the membrane; the sequence is VGNRFQQKLRSVFRVPITWLQGKRETMSCRKGSSLREMDTFVS. The interval 324 to 333 is helix VIII; that stretch reads RFQQKLRSVF. Residue Ser354 is modified to Phosphoserine; by PKC.

The protein belongs to the G-protein coupled receptor 1 family. In terms of assembly, interacts with MTUS1. As to expression, expressed at highest levels in adrenal gland and uterus.

Its subcellular location is the cell membrane. In terms of biological role, receptor for angiotensin II, a vasoconstricting peptide. Signals primarily via a non-canonical G-protein- and beta-arrestin independent pathways. Cooperates with MTUS1 to inhibit ERK2 activation and cell proliferation. In Mus musculus (Mouse), this protein is Type-2 angiotensin II receptor.